A 514-amino-acid polypeptide reads, in one-letter code: Anthranilate synthase component 1 (514 aa).

L-tryptophan contacts are provided by residues T40 and P291–M293. G328–T329 is a binding site for chorismate. E361 is a Mg(2+) binding site. Residues Y449, R469, G482–G484, and G484 each bind chorismate. Position 497 (E497) interacts with Mg(2+).

It belongs to the anthranilate synthase component I family. In terms of assembly, heterotetramer consisting of two non-identical subunits: a beta subunit (TrpG) and a large alpha subunit (TrpE). Mg(2+) serves as cofactor.

The catalysed reaction is chorismate + L-glutamine = anthranilate + pyruvate + L-glutamate + H(+). It participates in amino-acid biosynthesis; L-tryptophan biosynthesis; L-tryptophan from chorismate: step 1/5. Its activity is regulated as follows. Feedback inhibited by tryptophan. Its function is as follows. Part of a heterotetrameric complex that catalyzes the two-step biosynthesis of anthranilate, an intermediate in the biosynthesis of L-tryptophan. In the first step, the glutamine-binding beta subunit (TrpG) of anthranilate synthase (AS) provides the glutamine amidotransferase activity which generates ammonia as a substrate that, along with chorismate, is used in the second step, catalyzed by the large alpha subunit of AS (TrpE) to produce anthranilate. In the absence of TrpG, TrpE can synthesize anthranilate directly from chorismate and high concentrations of ammonia. The protein is Anthranilate synthase component 1 (trpE) of Buchnera aphidicola subsp. Rhopalosiphum maidis.